A 501-amino-acid polypeptide reads, in one-letter code: Iroquois-class homeodomain protein IRX-3 (501 aa).

Positions 125–188 form a DNA-binding region, homeobox; TALE-type; it reads FGDPSRPKNA…ANARRRLKKE (64 aa). The tract at residues 190–381 is disordered; it reads KMTWAPRSRT…SPPGAAVAPS (192 aa). Composition is skewed to acidic residues over residues 210 to 220 and 227 to 258; these read REEEDEEEDEE and ELEE…DLEN. 2 positions are modified to phosphoserine: Ser-323 and Ser-326. Over residues 324-339 the composition is skewed to pro residues; it reads LPSPPVSLDPCAPAPA.

This sequence belongs to the TALE/IRO homeobox family.

It is found in the nucleus. In terms of biological role, transcription factor involved in SHH-dependent neural patterning. Together with NKX2-2 and NKX6-1 acts to restrict the generation of motor neurons to the appropriate region of the neural tube. Belongs to the class I proteins of neuronal progenitor factors, which are repressed by SHH signals. Involved in the transcriptional repression of MNX1 in non-motor neuron cells. Acts as a regulator of energy metabolism. The sequence is that of Iroquois-class homeodomain protein IRX-3 (IRX3) from Homo sapiens (Human).